The sequence spans 136 residues: MGARKKISAEKRKEALKTMYFAKLQNVPTSPRKMRLVADMIRGMEVNRALGVLKFSSKEAAARVEKLLRSAIANWEQKNERKAESGELFVTKIFVDGGATLKRMRPAPQGRGYRIRKRSNHVTLFVGSKSNNEDQN.

This sequence belongs to the universal ribosomal protein uL22 family. In terms of assembly, part of the 50S ribosomal subunit.

This protein binds specifically to 23S rRNA; its binding is stimulated by other ribosomal proteins, e.g. L4, L17, and L20. It is important during the early stages of 50S assembly. It makes multiple contacts with different domains of the 23S rRNA in the assembled 50S subunit and ribosome. In terms of biological role, the globular domain of the protein is located near the polypeptide exit tunnel on the outside of the subunit, while an extended beta-hairpin is found that lines the wall of the exit tunnel in the center of the 70S ribosome. The polypeptide is Large ribosomal subunit protein uL22 (Bacteroides fragilis (strain ATCC 25285 / DSM 2151 / CCUG 4856 / JCM 11019 / LMG 10263 / NCTC 9343 / Onslow / VPI 2553 / EN-2)).